Consider the following 640-residue polypeptide: Large subunit GTPase 1 homolog (640 aa).

The CP-type G domain maps to 165 to 426 (WRQLWRVIER…LCDCPGLVMP (262 aa)). Residue 213–216 (NKAD) participates in GTP binding. The disordered stretch occupies residues 251 to 341 (AEERGEDAMD…ESTATSSFYN (91 aa)). 3 stretches are compositionally biased toward acidic residues: residues 253–270 (ERGE…TEEE), 290–304 (EKDE…EGED), and 320–331 (ESGDEDHAEENP). Positions 332-341 (ESTATSSFYN) are enriched in polar residues. GTP-binding positions include 375 to 382 (GYPNVGKS) and 419 to 422 (DCPG). Residues 602-640 (GPVEAGKANTEQQAGKPWKKHGNRNKKEKVRRLNKHLDA) are disordered. The segment covering 618–640 (PWKKHGNRNKKEKVRRLNKHLDA) has biased composition (basic residues).

Belongs to the TRAFAC class YlqF/YawG GTPase family. LSG1 subfamily.

The protein localises to the cytoplasm. It is found in the endoplasmic reticulum. The protein resides in the nucleus. It localises to the cajal body. It catalyses the reaction GTP + H2O = GDP + phosphate + H(+). In terms of biological role, functions as a GTPase. May act by mediating the release of NMD3 from the 60S ribosomal subunit after export into the cytoplasm during the 60S ribosomal subunit maturation. This is Large subunit GTPase 1 homolog from Danio rerio (Zebrafish).